A 194-amino-acid chain; its full sequence is Putative 3-methyladenine DNA glycosylase (194 aa).

Belongs to the DNA glycosylase MPG family.

This is Putative 3-methyladenine DNA glycosylase from Aeropyrum pernix (strain ATCC 700893 / DSM 11879 / JCM 9820 / NBRC 100138 / K1).